We begin with the raw amino-acid sequence, 333 residues long: Adenosine deaminase (333 aa).

Zn(2+) is bound by residues His12 and His14. Residues His14, Asp16, and Gly170 each contribute to the substrate site. Residue His197 participates in Zn(2+) binding. The active-site Proton donor is Glu200. Residue Asp278 participates in Zn(2+) binding. Residue Asp279 participates in substrate binding.

It belongs to the metallo-dependent hydrolases superfamily. Adenosine and AMP deaminases family. Adenosine deaminase subfamily. Zn(2+) serves as cofactor.

It catalyses the reaction adenosine + H2O + H(+) = inosine + NH4(+). The enzyme catalyses 2'-deoxyadenosine + H2O + H(+) = 2'-deoxyinosine + NH4(+). Catalyzes the hydrolytic deamination of adenosine and 2-deoxyadenosine. This Shigella flexneri serotype 5b (strain 8401) protein is Adenosine deaminase.